The chain runs to 325 residues: Germination protease (325 aa).

Residues 1–7 (MYNVRTD) constitute a propeptide that is removed on maturation.

This sequence belongs to the peptidase A25 family. Homotetramer. Autoproteolytically processed. The inactive tetrameric zymogen termed p46 autoprocesses to a smaller form termed p41, which is active only during spore germination.

The enzyme catalyses Endopeptidase action with P4 Glu or Asp, P1 preferably Glu &gt; Asp, P1' hydrophobic and P2' Ala.. Its function is as follows. Initiates the rapid degradation of small, acid-soluble proteins during spore germination. The sequence is that of Germination protease from Clostridium perfringens (strain 13 / Type A).